Reading from the N-terminus, the 210-residue chain is MNREALRLYLVTNRYQDSVESFLAKVETACRSGVTIVQLREKNLTTNQYYQLAKQVKEITDAYQVPLIIDDRLDVCLAVDAAGLHIGDDELPVSVARKVLGPEKILGVTAKTVKRALEAEKSGADYLGTGAIFPTTTKENAPITLISTLKTICQTVAIPVVAIGGLTSENIDQLMGTGIAGVAVVRDLMQAEDIEAKTQAFLKKLHNILS.

Residues 38–42 and Asp70 contribute to the 4-amino-2-methyl-5-(diphosphooxymethyl)pyrimidine site; that span reads QLREK. The Mg(2+) site is built by Asp71 and Glu90. Thr109 contributes to the 4-amino-2-methyl-5-(diphosphooxymethyl)pyrimidine binding site. Residue 135 to 137 participates in 2-[(2R,5Z)-2-carboxy-4-methylthiazol-5(2H)-ylidene]ethyl phosphate binding; the sequence is TTT. Residue Lys138 coordinates 4-amino-2-methyl-5-(diphosphooxymethyl)pyrimidine. Residue Gly165 coordinates 2-[(2R,5Z)-2-carboxy-4-methylthiazol-5(2H)-ylidene]ethyl phosphate.

The protein belongs to the thiamine-phosphate synthase family. Requires Mg(2+) as cofactor.

The catalysed reaction is 2-[(2R,5Z)-2-carboxy-4-methylthiazol-5(2H)-ylidene]ethyl phosphate + 4-amino-2-methyl-5-(diphosphooxymethyl)pyrimidine + 2 H(+) = thiamine phosphate + CO2 + diphosphate. It carries out the reaction 2-(2-carboxy-4-methylthiazol-5-yl)ethyl phosphate + 4-amino-2-methyl-5-(diphosphooxymethyl)pyrimidine + 2 H(+) = thiamine phosphate + CO2 + diphosphate. The enzyme catalyses 4-methyl-5-(2-phosphooxyethyl)-thiazole + 4-amino-2-methyl-5-(diphosphooxymethyl)pyrimidine + H(+) = thiamine phosphate + diphosphate. It participates in cofactor biosynthesis; thiamine diphosphate biosynthesis; thiamine phosphate from 4-amino-2-methyl-5-diphosphomethylpyrimidine and 4-methyl-5-(2-phosphoethyl)-thiazole: step 1/1. Condenses 4-methyl-5-(beta-hydroxyethyl)thiazole monophosphate (THZ-P) and 2-methyl-4-amino-5-hydroxymethyl pyrimidine pyrophosphate (HMP-PP) to form thiamine monophosphate (TMP). The polypeptide is Thiamine-phosphate synthase 2 (Streptococcus pneumoniae serotype 4 (strain ATCC BAA-334 / TIGR4)).